The following is a 181-amino-acid chain: Trafficking protein particle complex subunit 3 homolog (181 aa).

Cys70 carries S-palmitoyl cysteine lipidation.

The protein belongs to the TRAPP small subunits family. BET3 subfamily. In terms of assembly, homodimer. Part of the multisubunit TRAPP (transport protein particle) complex.

It localises to the golgi apparatus. The protein localises to the cis-Golgi network. Its subcellular location is the endoplasmic reticulum. In terms of biological role, may play a role in vesicular transport from endoplasmic reticulum to Golgi. Required for the systemic spread of the RNAi response. The sequence is that of Trafficking protein particle complex subunit 3 homolog (trpp-3) from Caenorhabditis elegans.